Consider the following 452-residue polypeptide: MFGRVFIVAVLYCITICKGEDPTNSSTPKLILLSFDGFRADYLTRFPMPNLQEFMKEGVEVEEVKNVFITKTFPNHYSLVTGLYAESHGIVANRMYDADTKQVFHMNDSHSKWWDEATPIWLTNQKQGHRSGCAMWPGSDVSIHNTTPSDFLYYNHTVSFAQRVNHITTWLTRPNDSINFAAIYWEEPDASGHRYGPDDYGNMSGVLKEVDKNVGYLMSELKKANLWDTVNVIITSDHGMAQCSNDRIIKLNDCIGPGNYTLVDDNPVASILPISDTKNVYDLLRNCHPHMKVYMKEEIPDRWHYKHNSRIQPLLLVADEGWMITQNESISMLGDHGYDNDLHSMHPFLAAHGPAFRKSYKMRTINNVDVYPMMCLILGITGQPNNGTLSNTKCLLANQWCIQVSEAIGIVIGAIMVLTTLTCIIIMLKKKMPSARPFSRLQFQDDDDPLIG.

An N-terminal signal peptide occupies residues 1–19 (MFGRVFIVAVLYCITICKG). Residues 20–407 (EDPTNSSTPK…NQWCIQVSEA (388 aa)) lie on the Extracellular side of the membrane. Residue Asn-24 is glycosylated (N-linked (GlcNAc...) asparagine). Zn(2+) is bound by residues Asp-36 and Thr-72. Thr-72 acts as the AMP-threonine intermediate in catalysis. A substrate-binding site is contributed by Asn-93. N-linked (GlcNAc...) asparagine glycosylation is present at Asn-107. Substrate is bound at residue Tyr-154. Asn-155 and Asn-175 each carry an N-linked (GlcNAc...) asparagine glycan. Zn(2+)-binding residues include Asp-189 and His-193. Asp-189 lines the substrate pocket. N-linked (GlcNAc...) asparagine glycosylation occurs at Asn-202. Zn(2+)-binding residues include Asp-237 and His-238. Cys-254 and Cys-287 form a disulfide bridge. Residues Asn-259 and Asn-327 are each glycosylated (N-linked (GlcNAc...) asparagine). Zn(2+) is bound at residue His-336. Asn-386 carries N-linked (GlcNAc...) asparagine glycosylation. Cys-394 and Cys-401 are joined by a disulfide. Residues 408–428 (IGIVIGAIMVLTTLTCIIIML) form a helical membrane-spanning segment. The Cytoplasmic portion of the chain corresponds to 429 to 452 (KKKMPSARPFSRLQFQDDDDPLIG).

Belongs to the nucleotide pyrophosphatase/phosphodiesterase family. Zn(2+) is required as a cofactor.

The protein resides in the cell membrane. The enzyme catalyses P(1),P(3)-bis(5'-adenosyl) triphosphate + H2O = AMP + ADP + 2 H(+). Hydrolyzes extracellular Ap3A into AMP and ADP, and Ap4A into AMP and ATP. Ap3A and Ap4A are diadenosine polyphosphates thought to induce proliferation of vascular smooth muscle cells. Acts as a procoagulant, mediating platelet aggregation at the site of nascent thrombus via release of ADP from Ap3A and activation of ADP receptors. The sequence is that of Bis(5'-adenosyl)-triphosphatase enpp4 (enpp4) from Xenopus laevis (African clawed frog).